A 290-amino-acid chain; its full sequence is 4-diphosphocytidyl-2-C-methyl-D-erythritol kinase (290 aa).

K13 is a catalytic residue. Residue 93–103 (PVQAGLGGGSA) participates in ATP binding. The active site involves D135.

It belongs to the GHMP kinase family. IspE subfamily.

It carries out the reaction 4-CDP-2-C-methyl-D-erythritol + ATP = 4-CDP-2-C-methyl-D-erythritol 2-phosphate + ADP + H(+). It functions in the pathway isoprenoid biosynthesis; isopentenyl diphosphate biosynthesis via DXP pathway; isopentenyl diphosphate from 1-deoxy-D-xylulose 5-phosphate: step 3/6. Functionally, catalyzes the phosphorylation of the position 2 hydroxy group of 4-diphosphocytidyl-2C-methyl-D-erythritol. The sequence is that of 4-diphosphocytidyl-2-C-methyl-D-erythritol kinase from Desulfitobacterium hafniense (strain Y51).